The sequence spans 104 residues: Elicitor peptide 6 (104 aa).

A propeptide spanning residues 1 to 81 is cleaved from the precursor; that stretch reads MEVNGEEERR…TVEETGFMAR (81 aa). Positions 48-61 are enriched in low complexity; the sequence is SSSIPPSSSSSSPS. Residues 48–104 are disordered; the sequence is SSSIPPSSSSSSPSLVEEEDSGTETVEETGFMARITAVLRRRPRPPPYSSGRPGQNN. The segment covering 63-74 has biased composition (acidic residues); that stretch reads VEEEDSGTETVE.

It belongs to the brassicaceae elicitor peptide family.

Its function is as follows. Elicitor of plant defense. The chain is Elicitor peptide 6 (PEP6) from Arabidopsis thaliana (Mouse-ear cress).